The chain runs to 271 residues: Energy-coupling factor transporter ATP-binding protein EcfA (271 aa).

One can recognise an ABC transporter domain in the interval 2–231 (ISIQNLTFYY…PLFLQQYKLT (230 aa)). An ATP-binding site is contributed by 34 to 41 (GHNGSGKS).

Belongs to the ABC transporter superfamily. Energy-coupling factor EcfA family. In terms of assembly, forms a stable energy-coupling factor (ECF) transporter complex composed of 2 membrane-embedded substrate-binding proteins (S component), 2 ATP-binding proteins (A component) and 2 transmembrane proteins (T component).

Its subcellular location is the cell membrane. Its function is as follows. ATP-binding (A) component of a common energy-coupling factor (ECF) ABC-transporter complex. Unlike classic ABC transporters this ECF transporter provides the energy necessary to transport a number of different substrates. The protein is Energy-coupling factor transporter ATP-binding protein EcfA of Aster yellows witches'-broom phytoplasma (strain AYWB).